The following is a 185-amino-acid chain: Putative RNA (cytidine(34)-2'-O)-methyltransferase (185 aa).

The S-adenosyl-L-methionine site is built by I80, G105, and I126.

Belongs to the class IV-like SAM-binding methyltransferase superfamily. RNA methyltransferase TrmH family. TrmL subfamily.

The protein resides in the cytoplasm. The enzyme catalyses cytidine(34) in tRNA + S-adenosyl-L-methionine = 2'-O-methylcytidine(34) in tRNA + S-adenosyl-L-homocysteine + H(+). The catalysed reaction is 5-carboxymethylaminomethyluridine(34) in tRNA(Leu) + S-adenosyl-L-methionine = 5-carboxymethylaminomethyl-2'-O-methyluridine(34) in tRNA(Leu) + S-adenosyl-L-homocysteine + H(+). Could methylate the ribose at the nucleotide 34 wobble position in tRNA. The protein is Putative RNA (cytidine(34)-2'-O)-methyltransferase of Lactobacillus gasseri (strain ATCC 33323 / DSM 20243 / BCRC 14619 / CIP 102991 / JCM 1131 / KCTC 3163 / NCIMB 11718 / NCTC 13722 / AM63).